Here is a 141-residue protein sequence, read N- to C-terminus: Nucleoside diphosphate kinase (141 aa).

Lysine 10, phenylalanine 58, arginine 86, threonine 92, arginine 103, and asparagine 113 together coordinate ATP. The Pros-phosphohistidine intermediate role is filled by histidine 116.

Belongs to the NDK family. Homotetramer. Mg(2+) is required as a cofactor.

It localises to the cytoplasm. It carries out the reaction a 2'-deoxyribonucleoside 5'-diphosphate + ATP = a 2'-deoxyribonucleoside 5'-triphosphate + ADP. The catalysed reaction is a ribonucleoside 5'-diphosphate + ATP = a ribonucleoside 5'-triphosphate + ADP. In terms of biological role, major role in the synthesis of nucleoside triphosphates other than ATP. The ATP gamma phosphate is transferred to the NDP beta phosphate via a ping-pong mechanism, using a phosphorylated active-site intermediate. In Hydrogenovibrio crunogenus (strain DSM 25203 / XCL-2) (Thiomicrospira crunogena), this protein is Nucleoside diphosphate kinase.